Reading from the N-terminus, the 256-residue chain is Phosphatidylglycerol--prolipoprotein diacylglyceryl transferase (256 aa).

A run of 3 helical transmembrane segments spans residues 19 to 39, 56 to 76, and 91 to 111; these read VHWY…LGYW, LIFY…MLFY, and IWEG…AAWL. Arg-139 provides a ligand contact to a 1,2-diacyl-sn-glycero-3-phospho-(1'-sn-glycerol). Residues 231–251 form a helical membrane-spanning segment; that stretch reads FGWLTMGQVLSIPMLLIGIWL.

This sequence belongs to the Lgt family.

Its subcellular location is the cell inner membrane. The enzyme catalyses L-cysteinyl-[prolipoprotein] + a 1,2-diacyl-sn-glycero-3-phospho-(1'-sn-glycerol) = an S-1,2-diacyl-sn-glyceryl-L-cysteinyl-[prolipoprotein] + sn-glycerol 1-phosphate + H(+). The protein operates within protein modification; lipoprotein biosynthesis (diacylglyceryl transfer). Its function is as follows. Catalyzes the transfer of the diacylglyceryl group from phosphatidylglycerol to the sulfhydryl group of the N-terminal cysteine of a prolipoprotein, the first step in the formation of mature lipoproteins. This chain is Phosphatidylglycerol--prolipoprotein diacylglyceryl transferase, found in Legionella pneumophila (strain Lens).